A 318-amino-acid polypeptide reads, in one-letter code: Protein-L-histidine N-pros-methyltransferase (318 aa).

The first 18 residues, 1–18 (MRLLAGWLCLSLASVWLA), serve as a signal peptide directing secretion. Residue Asn35 is glycosylated (N-linked (GlcNAc...) asparagine). S-adenosyl-L-homocysteine contacts are provided by Glu174, Asn210, and Tyr295.

It belongs to the METTL9 family.

It is found in the endoplasmic reticulum. Its subcellular location is the mitochondrion. It carries out the reaction L-histidyl-[protein] + S-adenosyl-L-methionine = N(pros)-methyl-L-histidyl-[protein] + S-adenosyl-L-homocysteine + H(+). Protein-histidine N-methyltransferase that specifically catalyzes 1-methylhistidine (pros-methylhistidine) methylation of target proteins. Specifically methylates the second His of proteins with a His-x-His (HxH) motif (where 'x' is preferably a small amino acid), while exploiting the first one as a recognition signature. Catalyzes methylation of target proteins such as S100A9, NDUFB3, SLC39A5, SLC39A7, ARMC6 and DNAJB12; 1-methylhistidine modification may affect the binding of zinc and other metals to its target proteins. Constitutes the main methyltransferase for the 1-methylhistidine modification in cell. This is Protein-L-histidine N-pros-methyltransferase from Bos taurus (Bovine).